A 500-amino-acid polypeptide reads, in one-letter code: Protein DETOXIFICATION 29 (500 aa).

A run of 12 helical transmembrane segments spans residues Gly67–Val87, Val91–Cys111, Val132–Leu152, Ile161–Ile181, Val197–Ile217, Leu227–Phe247, Ala277–Leu297, Ile302–Ile322, Leu349–Phe369, Ile393–Gly413, Val419–Leu439, and Gly449–Ile469.

It belongs to the multi antimicrobial extrusion (MATE) (TC 2.A.66.1) family.

The protein localises to the vacuole membrane. This Arabidopsis thaliana (Mouse-ear cress) protein is Protein DETOXIFICATION 29.